Reading from the N-terminus, the 98-residue chain is NADH-ubiquinone oxidoreductase chain 4L (98 aa).

The next 3 membrane-spanning stretches (helical) occupy residues M1–M21, S29–L49, and M59–V79.

The protein belongs to the complex I subunit 4L family. As to quaternary structure, core subunit of respiratory chain NADH dehydrogenase (Complex I) which is composed of 45 different subunits.

It localises to the mitochondrion inner membrane. It catalyses the reaction a ubiquinone + NADH + 5 H(+)(in) = a ubiquinol + NAD(+) + 4 H(+)(out). Its function is as follows. Core subunit of the mitochondrial membrane respiratory chain NADH dehydrogenase (Complex I) which catalyzes electron transfer from NADH through the respiratory chain, using ubiquinone as an electron acceptor. Part of the enzyme membrane arm which is embedded in the lipid bilayer and involved in proton translocation. This Cervus elaphus (Red deer) protein is NADH-ubiquinone oxidoreductase chain 4L (MT-ND4L).